We begin with the raw amino-acid sequence, 475 residues long: Aspartyl/glutamyl-tRNA(Asn/Gln) amidotransferase subunit B (475 aa).

This sequence belongs to the GatB/GatE family. GatB subfamily. As to quaternary structure, heterotrimer of A, B and C subunits.

The catalysed reaction is L-glutamyl-tRNA(Gln) + L-glutamine + ATP + H2O = L-glutaminyl-tRNA(Gln) + L-glutamate + ADP + phosphate + H(+). The enzyme catalyses L-aspartyl-tRNA(Asn) + L-glutamine + ATP + H2O = L-asparaginyl-tRNA(Asn) + L-glutamate + ADP + phosphate + 2 H(+). In terms of biological role, allows the formation of correctly charged Asn-tRNA(Asn) or Gln-tRNA(Gln) through the transamidation of misacylated Asp-tRNA(Asn) or Glu-tRNA(Gln) in organisms which lack either or both of asparaginyl-tRNA or glutaminyl-tRNA synthetases. The reaction takes place in the presence of glutamine and ATP through an activated phospho-Asp-tRNA(Asn) or phospho-Glu-tRNA(Gln). This Chlorobium luteolum (strain DSM 273 / BCRC 81028 / 2530) (Pelodictyon luteolum) protein is Aspartyl/glutamyl-tRNA(Asn/Gln) amidotransferase subunit B.